The following is a 124-amino-acid chain: Aspartate 1-decarboxylase (124 aa).

Catalysis depends on S25, which acts as the Schiff-base intermediate with substrate; via pyruvic acid. S25 carries the post-translational modification Pyruvic acid (Ser). T57 serves as a coordination point for substrate. The active-site Proton donor is Y58. 73 to 75 contacts substrate; sequence GAA.

This sequence belongs to the PanD family. Heterooctamer of four alpha and four beta subunits. Pyruvate is required as a cofactor. Is synthesized initially as an inactive proenzyme, which is activated by self-cleavage at a specific serine bond to produce a beta-subunit with a hydroxyl group at its C-terminus and an alpha-subunit with a pyruvoyl group at its N-terminus.

The protein resides in the cytoplasm. It catalyses the reaction L-aspartate + H(+) = beta-alanine + CO2. Its pathway is cofactor biosynthesis; (R)-pantothenate biosynthesis; beta-alanine from L-aspartate: step 1/1. Functionally, catalyzes the pyruvoyl-dependent decarboxylation of aspartate to produce beta-alanine. The chain is Aspartate 1-decarboxylase from Clostridium beijerinckii (strain ATCC 51743 / NCIMB 8052) (Clostridium acetobutylicum).